The sequence spans 295 residues: Nitrogenase iron protein (295 aa).

Residue 10–17 participates in ATP binding; the sequence is GKGGIGKS. C98 contributes to the [4Fe-4S] cluster binding site. The residue at position 101 (R101) is an ADP-ribosylarginine; by dinitrogenase reductase ADP-ribosyltransferase. Residue C133 coordinates [4Fe-4S] cluster.

The protein belongs to the NifH/BchL/ChlL family. As to quaternary structure, homodimer. [4Fe-4S] cluster is required as a cofactor. In terms of processing, the reversible ADP-ribosylation of Arg-101 inactivates the nitrogenase reductase and regulates nitrogenase activity.

It catalyses the reaction N2 + 8 reduced [2Fe-2S]-[ferredoxin] + 16 ATP + 16 H2O = H2 + 8 oxidized [2Fe-2S]-[ferredoxin] + 2 NH4(+) + 16 ADP + 16 phosphate + 6 H(+). The key enzymatic reactions in nitrogen fixation are catalyzed by the nitrogenase complex, which has 2 components: the iron protein and the molybdenum-iron protein. The protein is Nitrogenase iron protein of Tolumonas auensis (strain DSM 9187 / NBRC 110442 / TA 4).